Reading from the N-terminus, the 488-residue chain is Tripartite motif-containing protein 6 (488 aa).

An RING-type zinc finger spans residues Cys-15–Arg-60. A B box-type zinc finger spans residues Leu-92–Met-133. Zn(2+) is bound by residues Cys-97, His-100, Cys-119, and His-125. Residues Leu-132 to Leu-223 adopt a coiled-coil conformation. In terms of domain architecture, B30.2/SPRY spans Asp-282–Ser-488.

It belongs to the TRIM/RBCC family. As to quaternary structure, homotrimer. Forms heteromultimers (via B30.2/SPRY domain) with TRIM5. Interacts with MYC. Interacts (via SPRY domain) with IKBKE. Interacts with VAMP8; this interaction contributes to the activation of the type I interferon antiviral response. Interacts with DHX16.

It localises to the cytoplasm. The catalysed reaction is S-ubiquitinyl-[E2 ubiquitin-conjugating enzyme]-L-cysteine + [acceptor protein]-L-lysine = [E2 ubiquitin-conjugating enzyme]-L-cysteine + N(6)-ubiquitinyl-[acceptor protein]-L-lysine.. The protein operates within protein modification; protein ubiquitination. E3 ubiquitin ligase that plays a crucial role in the activation of the IKBKE-dependent branch of the type I interferon signaling pathway. In concert with the ubiquitin-conjugating E2 enzyme UBE2K, synthesizes unanchored 'Lys-48'-linked polyubiquitin chains that promote the oligomerization and autophosphorylation of IKBKE leading to stimulation of an antiviral response. Also ubiquitinates MYC and inhibits its transcription activation activity, maintaining the pluripotency of embryonic stem cells. Promotes the association of unanchored 'Lys-48'-polyubiquitin chains with DHX16 leading to enhancement of RIGI-mediated innate antiviral immune response. The protein is Tripartite motif-containing protein 6 (Trim6) of Mus musculus (Mouse).